Here is a 515-residue protein sequence, read N- to C-terminus: Maturase K (515 aa).

This sequence belongs to the intron maturase 2 family. MatK subfamily.

The protein resides in the plastid. Its subcellular location is the chloroplast. In terms of biological role, usually encoded in the trnK tRNA gene intron. Probably assists in splicing its own and other chloroplast group II introns. In Ceratophyllum demersum (Rigid hornwort), this protein is Maturase K.